A 472-amino-acid chain; its full sequence is Trigger factor (472 aa).

A PPIase FKBP-type domain is found at 172–257 (GDEVRFDFKG…IKEITSVKPQ (86 aa)). 2 stretches are compositionally biased toward polar residues: residues 439–449 (NQPKDTASTLS) and 461–472 (KTSNTKKVASKK). The interval 439 to 472 (NQPKDTASTLSKQEDKPKVAKAKTSNTKKVASKK) is disordered.

It belongs to the FKBP-type PPIase family. Tig subfamily.

The protein resides in the cytoplasm. The catalysed reaction is [protein]-peptidylproline (omega=180) = [protein]-peptidylproline (omega=0). Functionally, involved in protein export. Acts as a chaperone by maintaining the newly synthesized protein in an open conformation. Functions as a peptidyl-prolyl cis-trans isomerase. The sequence is that of Trigger factor from Ureaplasma urealyticum serovar 10 (strain ATCC 33699 / Western).